Consider the following 707-residue polypeptide: Signal transducer and activator of transcription A (707 aa).

Residues 70–89 (LNQSDQFNLGRSNNLTPRTN) show a composition bias toward polar residues. Positions 70–246 (LNQSDQFNLG…GNPNLSSPQP (177 aa)) are disordered. The segment covering 90 to 111 (QLQQLQQQQQQQQQPQQQQQQQ) has biased composition (low complexity). The span at 112–121 (TYGTQSPIHM) shows a compositional bias: polar residues. Residues 142–238 (QQSYNNNNSN…QQQQQQQQGN (97 aa)) show a composition bias toward low complexity. The stretch at 242-356 (SSPQPILDTI…IQSILNPQHS (115 aa)) forms a coiled coil. A DNA-binding region spans residues 443–487 (KFLAGTRKCSVNLKFGVNIRDLDNVTTTVESDASNPFVVITNECQ). An SH2 domain is found at 583–686 (WQEGIIYGYM…FLKLHKDTAL (104 aa)). Tyr-702 carries the phosphotyrosine modification.

The protein belongs to the transcription factor STAT family. Monomer, in the absence of tyrosine phosphorylation. Homodimer, or heterodimer with another family member, when tyrosine phosphorylated. Post-translationally, tyrosine phosphorylated in response to cAMP. Not tyrosine phosphorylated in growing cells. Tyrosine phosphorylation is first detected at the tight mound stage, continues throughout the slug stage and early culmination, and starts to decrease at mid-culmination. Barely detectable in fruiting bodies.

The protein resides in the cytoplasm. The protein localises to the nucleus. Its function is as follows. Transcription factor that binds to 5'-TTGAATTGA-3' elements in the promoter region of target genes. Functions as a repressor of the ecmB gene. Regulates the differentiation of prestalk cells during development. The chain is Signal transducer and activator of transcription A (dstA) from Dictyostelium discoideum (Social amoeba).